The following is an 877-amino-acid chain: Putative ankyrin repeat protein R748 (877 aa).

ANK repeat units lie at residues 44–74, 79–109, 115–145, 202–231, 243–272, and 282–311; these read IRHI…TINV, QNNT…NINY, IGIS…AIQQ, MGYR…SINE, NNND…PIHM, and LVPT…SIQA. The interval 525–579 is disordered; the sequence is DSDEDPVCDSNESDNSNDINNHVKSDNKLNSSNDYYDEDDSEDNYNNQSDDEPLV. Positions 533–544 are enriched in low complexity; sequence DSNESDNSNDIN.

The sequence is that of Putative ankyrin repeat protein R748 from Acanthamoeba polyphaga mimivirus (APMV).